The sequence spans 234 residues: uncharacterized protein (234 aa).

A disordered region spans residues 62–99 (NEESISDLNSDNPGNSEPSDVESFVLSDEDENSEKDFS). Residues 67 to 79 (SDLNSDNPGNSEP) are compositionally biased toward polar residues.

This is an uncharacterized protein from Acanthamoeba polyphaga (Amoeba).